Reading from the N-terminus, the 431-residue chain is Protein translocase subunit SecY (431 aa).

Residues 1–17 lie on the Cytoplasmic side of the membrane; it reads MFKTISNFMRVSDIRNK. The chain crosses the membrane as a helical span at residues 18 to 38; that stretch reads IIFTLLMLIVFRIGAFIPVPY. Over 39 to 66 the chain is Extracellular; that stretch reads VNAEALQAQSQMGVFDLLNTFGGGALYQ. The chain crosses the membrane as a helical span at residues 67–87; it reads FSIFAMGITPYITASIIIQLL. The Cytoplasmic portion of the chain corresponds to 88–115; that stretch reads QMDVVPKFTEWSKQGEVGRRKLAQFTRY. The chain crosses the membrane as a helical span at residues 116 to 136; the sequence is FTIVLGFIQALGMSYGFNNLA. Over 137–145 the chain is Extracellular; it reads NGMLIEKSG. A helical transmembrane segment spans residues 146-166; that stretch reads VSTYLIIALVLTGGTAFLMWL. Topologically, residues 167-177 are cytoplasmic; that stretch reads GEQITSHGVGN. Residues 178–198 traverse the membrane as a helical segment; it reads GISIIIFAGIVSSIPKTIGQI. Residues 199 to 213 lie on the Extracellular side of the membrane; sequence YETQFVGSNDQLFIH. A helical transmembrane segment spans residues 214-234; sequence IVKVALLVIAILAVIVGVIFI. Residues 235–261 lie on the Cytoplasmic side of the membrane; the sequence is QQAVRKIAIQYAKGTGRSPAGGGQSTH. Residues 262–282 form a helical membrane-spanning segment; that stretch reads LPLKVNPAGVIPVIFAVAFLI. Residues 283-308 are Extracellular-facing; that stretch reads TPRTIASFFGTNDVTKWIQNNFDNTH. The helical transmembrane segment at 309 to 329 threads the bilayer; it reads PVGMAIYVALIIAFTYFYAFV. The Cytoplasmic segment spans residues 330–368; the sequence is QVNPEQMADNLKKQGGYIPGVRPGKMTQDRITSILYRLT. The next 2 helical transmembrane spans lie at 369-389 and 390-410; these read FVGS…IQFA and GLPQ…GVAL. At 411–431 the chain is on the cytoplasmic side; sequence ETMKQLESQLVKRNYRGFMKN.

Belongs to the SecY/SEC61-alpha family. Component of the Sec protein translocase complex. Heterotrimer consisting of SecY, SecE and SecG subunits. The heterotrimers can form oligomers, although 1 heterotrimer is thought to be able to translocate proteins. Interacts with the ribosome. Interacts with SecDF, and other proteins may be involved. Interacts with SecA. Interacts with FloT.

The protein resides in the cell membrane. It localises to the membrane raft. Functionally, the central subunit of the protein translocation channel SecYEG. Consists of two halves formed by TMs 1-5 and 6-10. These two domains form a lateral gate at the front which open onto the bilayer between TMs 2 and 7, and are clamped together by SecE at the back. The channel is closed by both a pore ring composed of hydrophobic SecY resides and a short helix (helix 2A) on the extracellular side of the membrane which forms a plug. The plug probably moves laterally to allow the channel to open. The ring and the pore may move independently. The protein is Protein translocase subunit SecY of Bacillus subtilis (strain 168).